A 264-amino-acid polypeptide reads, in one-letter code: Zearalenone hydrolase (264 aa).

The region spanning 27 to 207 is the AB hydrolase-1 domain; that stretch reads VLVPDGLGEC…KDLEALRGKP (181 aa). The zearalenone site is built by G32, S102, and S103. The active site involves S102. The active site involves E126. Zearalenone is bound by residues W183, Y187, S220, and H242. H242 is a catalytic residue.

Belongs to the AB hydrolase superfamily. Hydrolase RutD family. In terms of assembly, homodimer.

It carries out the reaction zearalenone + H2O = hydrolyzed zearalenone + H(+). Its function is as follows. Lactonohydrolase that specifically hydrolyzes and deactivates the mycotoxin zearalenone (ZEN) and its zearalenol (ZOL) derivatives. ZHD101 prefers ZEN to ZOL as its substrate, but ZOL, especially the alpha-form, shows higher estrogenic toxicity than ZEN. This Bionectria ochroleuca (Gliocladium roseum) protein is Zearalenone hydrolase.